A 250-amino-acid chain; its full sequence is 3-deoxy-manno-octulosonate cytidylyltransferase (250 aa).

This sequence belongs to the KdsB family.

It is found in the cytoplasm. The catalysed reaction is 3-deoxy-alpha-D-manno-oct-2-ulosonate + CTP = CMP-3-deoxy-beta-D-manno-octulosonate + diphosphate. It functions in the pathway nucleotide-sugar biosynthesis; CMP-3-deoxy-D-manno-octulosonate biosynthesis; CMP-3-deoxy-D-manno-octulosonate from 3-deoxy-D-manno-octulosonate and CTP: step 1/1. The protein operates within bacterial outer membrane biogenesis; lipopolysaccharide biosynthesis. Activates KDO (a required 8-carbon sugar) for incorporation into bacterial lipopolysaccharide in Gram-negative bacteria. The chain is 3-deoxy-manno-octulosonate cytidylyltransferase from Azorhizobium caulinodans (strain ATCC 43989 / DSM 5975 / JCM 20966 / LMG 6465 / NBRC 14845 / NCIMB 13405 / ORS 571).